Reading from the N-terminus, the 297-residue chain is Virulence genes transcriptional activator (297 aa).

The 61-residue stretch at 1 to 61 (MDFLINKKLK…IRKNGTLIPT (61 aa)) folds into the HTH lysR-type domain. The segment at residues 21–40 (FSIATSVLYITRTPLSRVIS) is a DNA-binding region (H-T-H motif).

Belongs to the LysR transcriptional regulatory family.

The protein localises to the cytoplasm. Positive regulator for the plasmid-encoded virulence factors SpvA, SpvB, and SpvC. This Salmonella typhimurium (strain LT2 / SGSC1412 / ATCC 700720) protein is Virulence genes transcriptional activator (mkaC).